A 381-amino-acid polypeptide reads, in one-letter code: Chymosin (381 aa).

The signal sequence occupies residues 1-16 (MRGFVVLLAVFALSQA). A propeptide spans 17–58 (SGIVRIPLHKGKSLRRALKERGLLEDFLKNHQHAVSRKHSNS) (activation peptide). Residues 74 to 378 (YFGKIYIGTP…DRASNLVGLA (305 aa)) enclose the Peptidase A1 domain. The active site involves Asp-92. The stretch at 92 to 102 (DTGSSDLWVPS) is repeat 1. Cystine bridges form between Cys-105/Cys-110 and Cys-265/Cys-269. Asp-274 is a catalytic residue. The stretch at 274–284 (DTGTSMLVGPG) is repeat 2. Cys-308 and Cys-341 are disulfide-bonded.

Belongs to the peptidase A1 family. As to quaternary structure, monomer.

The catalysed reaction is Broad specificity similar to that of pepsin A. Clots milk by cleavage of a single 104-Ser-Phe-|-Met-Ala-107 bond in kappa-chain of casein.. Inhibited by pepstatin. Hydrolyzes a variety of proteins. The polypeptide is Chymosin (CYM) (Callithrix jacchus (White-tufted-ear marmoset)).